A 150-amino-acid polypeptide reads, in one-letter code: Aspartate 1-decarboxylase (150 aa).

The active-site Schiff-base intermediate with substrate; via pyruvic acid is S24. S24 carries the post-translational modification Pyruvic acid (Ser). A substrate-binding site is contributed by T56. Y57 functions as the Proton donor in the catalytic mechanism. Residue G72–A74 participates in substrate binding.

This sequence belongs to the PanD family. In terms of assembly, heterooctamer of four alpha and four beta subunits. It depends on pyruvate as a cofactor. In terms of processing, is synthesized initially as an inactive proenzyme, which is activated by self-cleavage at a specific serine bond to produce a beta-subunit with a hydroxyl group at its C-terminus and an alpha-subunit with a pyruvoyl group at its N-terminus.

The protein resides in the cytoplasm. It carries out the reaction L-aspartate + H(+) = beta-alanine + CO2. It functions in the pathway cofactor biosynthesis; (R)-pantothenate biosynthesis; beta-alanine from L-aspartate: step 1/1. In terms of biological role, catalyzes the pyruvoyl-dependent decarboxylation of aspartate to produce beta-alanine. This is Aspartate 1-decarboxylase from Beijerinckia indica subsp. indica (strain ATCC 9039 / DSM 1715 / NCIMB 8712).